A 917-amino-acid chain; its full sequence is Nitrate reductase [NADH] 2 (917 aa).

The segment at 1-72 is disordered; the sequence is MAASVDNRQY…SEDENETHNS (72 aa). Positions 37 to 47 are enriched in polar residues; that stretch reads AHQNQTTNQTV. Residues 57 to 67 show a composition bias toward acidic residues; the sequence is DDEDVSSEDEN. Residue Cys191 coordinates Mo-molybdopterin. The Cytochrome b5 heme-binding domain maps to 542–617; the sequence is AKMYSMSEVK…LEDYRIGELI (76 aa). Heme is bound by residues His577 and His600. In terms of domain architecture, FAD-binding FR-type spans 660–772; it reads RAKVPVQLVE…KGPLGHVEYL (113 aa). Residues 712–715, 729–733, Phe734, Phe741, 746–748, and Thr799 contribute to the FAD site; these read RAYT, VVKIY, and LMS.

This sequence belongs to the nitrate reductase family. In terms of assembly, homodimer. It depends on FAD as a cofactor. The cofactor is heme. Mo-molybdopterin is required as a cofactor. In terms of tissue distribution, root, leaf, and shoot.

The catalysed reaction is nitrite + NAD(+) + H2O = nitrate + NADH + H(+). In terms of biological role, nitrate reductase is a key enzyme involved in the first step of nitrate assimilation in plants, fungi and bacteria. In Arabidopsis thaliana (Mouse-ear cress), this protein is Nitrate reductase [NADH] 2 (NIA2).